The sequence spans 239 residues: Flagellar L-ring protein (239 aa).

The N-terminal stretch at 1 to 16 (MKPVILATASALLLAA) is a signal peptide. The N-palmitoyl cysteine moiety is linked to residue C17. C17 carries the S-diacylglycerol cysteine lipid modification. Residues 120 to 138 (SGSTSGSASGNLGLTGDTS) show a composition bias toward polar residues. Residues 120–145 (SGSTSGSASGNLGLTGDTSTDGKGKI) are disordered.

The protein belongs to the FlgH family. The basal body constitutes a major portion of the flagellar organelle and consists of four rings (L,P,S, and M) mounted on a central rod.

It is found in the cell outer membrane. It localises to the bacterial flagellum basal body. Functionally, assembles around the rod to form the L-ring and probably protects the motor/basal body from shearing forces during rotation. The polypeptide is Flagellar L-ring protein (Azorhizobium caulinodans (strain ATCC 43989 / DSM 5975 / JCM 20966 / LMG 6465 / NBRC 14845 / NCIMB 13405 / ORS 571)).